The primary structure comprises 134 residues: ATP synthase epsilon chain (134 aa).

Positions alanine 94 to histidine 104 are enriched in basic and acidic residues. Residues alanine 94–asparagine 115 form a disordered region.

The protein belongs to the ATPase epsilon chain family. F-type ATPases have 2 components, CF(1) - the catalytic core - and CF(0) - the membrane proton channel. CF(1) has five subunits: alpha(3), beta(3), gamma(1), delta(1), epsilon(1). CF(0) has three main subunits: a, b and c.

Its subcellular location is the cell membrane. Its function is as follows. Produces ATP from ADP in the presence of a proton gradient across the membrane. This is ATP synthase epsilon chain from Staphylococcus epidermidis (strain ATCC 12228 / FDA PCI 1200).